The chain runs to 326 residues: 3-oxopimeloyl-[acyl-carrier-protein] synthase (326 aa).

Residues C115 and H253 contribute to the active site. Residues 254–258 are ACP-binding; that stretch reads QANIR. Residue N283 is part of the active site.

This sequence belongs to the thiolase-like superfamily. BioZ family.

It carries out the reaction malonyl-[ACP] + an acyl-CoA + H(+) = a 3-oxoacyl-[ACP] + CO2 + CoA. The enzyme catalyses glutaryl-CoA + malonyl-[ACP] + H(+) = 3-oxo-6-carboxyhexanoyl-[ACP] + CO2 + CoA. Its pathway is cofactor biosynthesis; biotin biosynthesis. In terms of biological role, involved in the formation of the biotin precursor pimeloyl-ACP. Catalyzes the condensation of glutaryl-CoA, an intermediate in lysine degradation, with malonyl-ACP to produce 3-oxopimeloyl-ACP. The sequence is that of 3-oxopimeloyl-[acyl-carrier-protein] synthase from Brucella abortus (strain 2308).